We begin with the raw amino-acid sequence, 165 residues long: MGWDLTVKMLAGNEFQVSLSSSMSVSELKAQITQKIGVHAFQQRLAVHPSGVALQDRVPLASQGLGPGSTVLLVVDKCDEPLSILVRNNKGRSSTYEVRLTQTVAHLKQQVSGLEGVQDDLFWLTFEGKPLEDQLPLGEYGLKPLSTVFMNLRLRGGGTEPGGRS.

Ubiquitin-like domains lie at 2–78 and 79–157; these read GWDL…VDKC and DEPL…LRGG. An S-nitrosocysteine; alternate modification is found at Cys78. Residues 152-157 carry the LRLRGG motif; that stretch reads LRLRGG. The interval 153 to 157 is involved in the ligation of specific target proteins; that stretch reads RLRGG. Gly157 is covalently cross-linked (Glycyl lysine isopeptide (Gly-Lys) (interchain with K-? in acceptor proteins)). Residues 158–165 constitute a propeptide, removed in mature form; sequence GTEPGGRS.

In terms of assembly, homodimer; disulfide-linked. Interacts with, and is conjugated to its targets by UBE1L (E1 enzyme) and UBE2E2 (E2 enzyme). Interacts with NEDD4. Interacts with PARP12; this interaction inhibits PINK1/Parkin-dependent mitophagy. (Microbial infection) Interacts with vaccinia virus protein E3. As to quaternary structure, (Microbial infection) Interaction with influenza B NS1 protein inhibits its conjugation. In terms of assembly, (Microbial infection) Interacts (via C-terminus) with Crimean-Congo hemorrhagic fever virus (CCHFV) RNA-directed RNA polymerase L (via N-terminus); the deISGylase activity of the viral protein interferes with antiviral signaling pathways mediated by NF-kappaB and IRF signalings. (Microbial infection) Interacts with human cytomegalovirus protein UL26; this interaction inhibits global protein ISGylation. Post-translationally, S-nitrosylation decreases its dimerization, thereby increasing the availability as well as the solubility of monomeric ISG15 for its conjugation to cellular proteins. In terms of processing, induced as an inactive, precursor protein that is cleaved by specific proteases to expose the C-terminal diglycine (LRLRGG) motif. This motif is essential not only for its conjugation to substrates but also for its recognition by the relevant processing proteases. In terms of tissue distribution, detected in lymphoid cells, striated and smooth muscle, several epithelia and neurons. Expressed in neutrophils, monocytes and lymphocytes. Enhanced expression seen in pancreatic adenocarcinoma, endometrial cancer, and bladder cancer, as compared to non-cancerous tissue. In bladder cancer, the increase in expression exhibits a striking positive correlation with more advanced stages of the disease.

The protein resides in the cytoplasm. It localises to the secreted. Its function is as follows. Ubiquitin-like protein which plays a key role in the innate immune response to viral infection either via its conjugation to a target protein (ISGylation) or via its action as a free or unconjugated protein. ISGylation involves a cascade of enzymatic reactions involving E1, E2, and E3 enzymes which catalyze the conjugation of ISG15 to a lysine residue in the target protein. Its target proteins include IFIT1, MX1/MxA, PPM1B, UBE2L6, UBA7, CHMP5, CHMP2A, CHMP4B and CHMP6. Isgylation of the viral sensor IFIH1/MDA5 promotes IFIH1/MDA5 oligomerization and triggers activation of innate immunity against a range of viruses, including coronaviruses, flaviviruses and picornaviruses. Can also isgylate: EIF2AK2/PKR which results in its activation, RIGI which inhibits its function in antiviral signaling response, EIF4E2 which enhances its cap structure-binding activity and translation-inhibition activity, UBE2N and UBE2E1 which negatively regulates their activity, IRF3 which inhibits its ubiquitination and degradation and FLNB which prevents its ability to interact with the upstream activators of the JNK cascade thereby inhibiting IFNA-induced JNK signaling. Exhibits antiviral activity towards both DNA and RNA viruses, including influenza A, HIV-1 and Ebola virus. Restricts HIV-1 and ebola virus via disruption of viral budding. Inhibits the ubiquitination of HIV-1 Gag and host TSG101 and disrupts their interaction, thereby preventing assembly and release of virions from infected cells. Inhibits Ebola virus budding mediated by the VP40 protein by disrupting ubiquitin ligase activity of NEDD4 and its ability to ubiquitinate VP40. ISGylates influenza A virus NS1 protein which causes a loss of function of the protein and the inhibition of virus replication. The secreted form of ISG15 can: induce natural killer cell proliferation, act as a chemotactic factor for neutrophils and act as a IFN-gamma-inducing cytokine playing an essential role in antimycobacterial immunity. The secreted form acts through the integrin ITGAL/ITGB2 receptor to initiate activation of SRC family tyrosine kinases including LYN, HCK and FGR which leads to secretion of IFNG and IL10; the interaction is mediated by ITGAL. This chain is Ubiquitin-like protein ISG15, found in Homo sapiens (Human).